A 279-amino-acid chain; its full sequence is Oxygen-dependent coproporphyrinogen-III oxidase (279 aa).

A substrate-binding site is contributed by serine 102. A divalent metal cation-binding residues include histidine 106 and histidine 116. Histidine 116 (proton donor) is an active-site residue. 118–120 (NTR) contributes to the substrate binding site. Histidine 149 and histidine 179 together coordinate a divalent metal cation. The tract at residues 244-279 (YVEFNLLYDRGTKFGLMTDGNVEAILMSLPPVVKFN) is important for dimerization.

The protein belongs to the aerobic coproporphyrinogen-III oxidase family. As to quaternary structure, homodimer. A divalent metal cation is required as a cofactor.

The protein resides in the cytoplasm. It catalyses the reaction coproporphyrinogen III + O2 + 2 H(+) = protoporphyrinogen IX + 2 CO2 + 2 H2O. The protein operates within porphyrin-containing compound metabolism; protoporphyrin-IX biosynthesis; protoporphyrinogen-IX from coproporphyrinogen-III (O2 route): step 1/1. Functionally, involved in the heme biosynthesis. Catalyzes the aerobic oxidative decarboxylation of propionate groups of rings A and B of coproporphyrinogen-III to yield the vinyl groups in protoporphyrinogen-IX. This chain is Oxygen-dependent coproporphyrinogen-III oxidase, found in Rickettsia prowazekii (strain Madrid E).